The primary structure comprises 199 residues: Probable GTP-binding protein EngB (199 aa).

Residues 28–199 (DLPEIALAGR…DSWDAILEQV (172 aa)) enclose the EngB-type G domain. Residues 36-43 (GRSNVGKS), 63-67 (GKTQL), 81-84 (DVPG), 148-151 (TKAD), and 180-182 (FSS) each bind GTP. 2 residues coordinate Mg(2+): Ser-43 and Thr-65.

This sequence belongs to the TRAFAC class TrmE-Era-EngA-EngB-Septin-like GTPase superfamily. EngB GTPase family. It depends on Mg(2+) as a cofactor.

Its function is as follows. Necessary for normal cell division and for the maintenance of normal septation. This chain is Probable GTP-binding protein EngB, found in Streptococcus pyogenes serotype M18 (strain MGAS8232).